The primary structure comprises 347 residues: S-adenosylmethionine:tRNA ribosyltransferase-isomerase (347 aa).

The protein belongs to the QueA family. Monomer.

The protein resides in the cytoplasm. It carries out the reaction 7-aminomethyl-7-carbaguanosine(34) in tRNA + S-adenosyl-L-methionine = epoxyqueuosine(34) in tRNA + adenine + L-methionine + 2 H(+). It participates in tRNA modification; tRNA-queuosine biosynthesis. Functionally, transfers and isomerizes the ribose moiety from AdoMet to the 7-aminomethyl group of 7-deazaguanine (preQ1-tRNA) to give epoxyqueuosine (oQ-tRNA). The protein is S-adenosylmethionine:tRNA ribosyltransferase-isomerase of Ectopseudomonas mendocina (strain ymp) (Pseudomonas mendocina).